Reading from the N-terminus, the 160-residue chain is Aspartate 1-decarboxylase 2 (160 aa).

The Schiff-base intermediate with substrate; via pyruvic acid role is filled by serine 25. Serine 25 carries the post-translational modification Pyruvic acid (Ser). Threonine 57 lines the substrate pocket. Catalysis depends on tyrosine 58, which acts as the Proton donor. 73 to 75 is a substrate binding site; that stretch reads GAA.

The protein belongs to the PanD family. Heterooctamer of four alpha and four beta subunits. It depends on pyruvate as a cofactor. In terms of processing, is synthesized initially as an inactive proenzyme, which is activated by self-cleavage at a specific serine bond to produce a beta-subunit with a hydroxyl group at its C-terminus and an alpha-subunit with a pyruvoyl group at its N-terminus.

It localises to the cytoplasm. The enzyme catalyses L-aspartate + H(+) = beta-alanine + CO2. It participates in cofactor biosynthesis; (R)-pantothenate biosynthesis; beta-alanine from L-aspartate: step 1/1. Its function is as follows. Catalyzes the pyruvoyl-dependent decarboxylation of aspartate to produce beta-alanine. The sequence is that of Aspartate 1-decarboxylase 2 from Frankia casuarinae (strain DSM 45818 / CECT 9043 / HFP020203 / CcI3).